A 1838-amino-acid chain; its full sequence is Collagen alpha-1(V) chain (1838 aa).

Residues 1-37 (MDVHTRWKARSALRPGAPLLPPLLLLLLWAPPPSRAA) form the signal peptide. The region spanning 72-244 (DVAYRVTKDA…DYCEHYSPDC (173 aa)) is the Laminin G-like domain. Positions 231-443 (RAAYDYCEHY…MPANQDTIYE (213 aa)) are nonhelical region. Residues Tyr-234, Tyr-236, Tyr-240, Tyr-262, and Tyr-263 each carry the sulfotyrosine modification. 5 disordered regions span residues 242–269 (PDCD…GDGE), 281–457 (EDPE…QKGE), 470–520 (PPGP…GTML), 526–545 (FGGG…QESQ), and 559–1574 (GPAG…EVIQ). Positions 258-269 (NPDEYYTEGDGE) are enriched in acidic residues. Residues 285 to 304 (DLGKEPTPSKKPVEAAKETT) show a composition bias toward basic and acidic residues. Low complexity predominate over residues 309–323 (ELTPTPTEAAPMPET). 4 positions are modified to sulfotyrosine: Tyr-338, Tyr-340, Tyr-346, and Tyr-347. Residues 377 to 388 (PTSTADTSNSSN) show a composition bias toward polar residues. Over residues 396–406 (GADDLEGEFTE) the composition is skewed to acidic residues. Tyr-416, Tyr-417, Tyr-420, and Tyr-421 each carry sulfotyrosine. The span at 417–428 (YDPYYDPTSSPS) shows a compositional bias: low complexity. The interrupted collagenous region stretch occupies residues 444 to 558 (GIGGPRGEKG…ILQQARLALR (115 aa)). Pro residues predominate over residues 470–485 (PPGPEGPAGLPGPPGT). The segment covering 506-520 (LPGADGLPGPPGTML) has biased composition (low complexity). The triple-helical region stretch occupies residues 559–1570 (GPAGPMGLTG…GPPGPPGPPG (1012 aa)). Hydroxyproline occurs at positions 570 and 576. Residues 587–597 (DVGPQGPRGVQ) show a composition bias toward low complexity. Pro-621 bears the Hydroxyproline mark. A 5-hydroxylysine modification is found at Lys-627. At Pro-639 the chain carries Hydroxyproline. The residue at position 642 (Lys-642) is a 5-hydroxylysine. Residues Pro-648, Pro-654, Pro-657, Pro-675, and Pro-678 each carry the hydroxyproline modification. The segment covering 671–686 (PRGLPGEPGPRGLLGP) has biased composition (low complexity). Position 687 is a 5-hydroxylysine (Lys-687). Positions 687 to 696 (KGPPGPPGPP) are enriched in pro residues. Hydroxyproline occurs at positions 690, 696, and 705. Lys-708 is modified (5-hydroxylysine). Hydroxyproline is present on residues Pro-717, Pro-720, Pro-726, and Pro-732. Positions 722 to 741 (QQGNPGAQGLPGPQGAIGPP) are enriched in low complexity. A 5-hydroxylysine modification is found at Lys-744. Positions 747–756 (LGKPGLPGMP) are enriched in low complexity. Hydroxyproline occurs at positions 750, 756, 762, 765, and 771. A 5-hydroxylysine modification is found at Lys-774. Residues Pro-780 and Pro-789 each carry the hydroxyproline modification. 5-hydroxylysine is present on residues Lys-795, Lys-804, Lys-807, and Lys-810. Pro-816 bears the Hydroxyproline mark. Residue Lys-819 is modified to 5-hydroxylysine. Pro-834 is modified (hydroxyproline). The span at 837–846 (RGEDGPEGPK) shows a compositional bias: basic and acidic residues. Residue Lys-846 is modified to 5-hydroxylysine. Pro-861 bears the Hydroxyproline mark. A 5-hydroxylysine modification is found at Lys-864. The span at 867-876 (LGVPGLPGYP) shows a compositional bias: low complexity. Hydroxyproline is present on residues Pro-870, Pro-873, and Pro-876. Lys-882 carries the 5-hydroxylysine modification. Hydroxyproline occurs at positions 888 and 891. Lys-897 carries the 5-hydroxylysine modification. Hydroxyproline occurs at positions 903 and 906. Residues 908 to 917 (PRGQRGPTGP) show a composition bias toward low complexity. 2 positions are modified to hydroxyproline: Pro-930 and Pro-945. Low complexity-rich tracts occupy residues 971–990 (KDGL…QGKT) and 999–1011 (VGPQ…TGPM). A hydroxyproline mark is found at Pro-1017, Pro-1020, Pro-1023, and Pro-1029. A compositionally biased stretch (low complexity) spans 1088–1104 (SPGERGPAGAAGPIGIP). Pro residues predominate over residues 1106-1115 (RPGPQGPPGP). The segment covering 1116-1140 (AGEKGAPGEKGPQGPAGRDGLQGPV) has biased composition (low complexity). A hydroxyproline mark is found at Pro-1221 and Pro-1224. The span at 1259–1268 (PSGAPGADGP) shows a compositional bias: low complexity. 2 stretches are compositionally biased toward pro residues: residues 1380–1398 (TGEP…PGPA) and 1454–1469 (SPGP…PPGL). Hydroxyproline is present on residues Pro-1467 and Pro-1470. The segment covering 1485–1494 (PGLIGLIGPP) has biased composition (low complexity). Residues 1526-1541 (PIGPPGPPGLPGPPGP) show a composition bias toward pro residues. The segment covering 1542–1554 (KGAKGSSGPTGPK) has biased composition (low complexity). A compositionally biased stretch (pro residues) spans 1560 to 1569 (PGPPGPPGPP). Positions 1571-1605 (EVIQPLPIQASRTRRNIDASQLLDDGNGENYVDYA) are nonhelical region. 2 positions are modified to sulfotyrosine: Tyr-1601 and Tyr-1604. A propeptide spans 1606 to 1838 (DGMEEIFGSL…FEVGPACFMG (233 aa)) (C-terminal propeptide). The 229-residue stretch at 1609–1837 (EEIFGSLNSL…GFEVGPACFM (229 aa)) folds into the Fibrillar collagen NC1 domain. 3 cysteine pairs are disulfide-bonded: Cys-1639-Cys-1671, Cys-1680-Cys-1835, and Cys-1746-Cys-1789. 5 residues coordinate Ca(2+): Asp-1657, Asn-1659, Gln-1660, Cys-1662, and Asp-1665.

This sequence belongs to the fibrillar collagen family. In terms of assembly, trimers of two alpha 1(V) and one alpha 2(V) chains in most tissues and trimers of one alpha 1(V), one alpha 2(V), and one alpha 3(V) chains in placenta. Interacts with CSPG4. Prolines at the third position of the tripeptide repeating unit (G-X-Y) are hydroxylated in some or all of the chains. In terms of processing, sulfated on 40% of tyrosines.

It localises to the secreted. The protein resides in the extracellular space. The protein localises to the extracellular matrix. In terms of biological role, type V collagen is a member of group I collagen (fibrillar forming collagen). It is a minor connective tissue component of nearly ubiquitous distribution. Type V collagen binds to DNA, heparan sulfate, thrombospondin, heparin, and insulin. The sequence is that of Collagen alpha-1(V) chain (COL5A1) from Homo sapiens (Human).